A 456-amino-acid chain; its full sequence is Arginine biosynthesis bifunctional protein ArgJ, mitochondrial (456 aa).

Residues threonine 184, lysine 213, threonine 224, glutamate 311, asparagine 451, and threonine 456 each coordinate substrate. The Nucleophile role is filled by threonine 224.

It belongs to the ArgJ family. As to quaternary structure, heterodimer of an alpha and a beta chain. Post-translationally, the alpha and beta chains are autoproteolytically processed from a single precursor protein within the mitochondrion.

It is found in the mitochondrion matrix. It carries out the reaction N(2)-acetyl-L-ornithine + L-glutamate = N-acetyl-L-glutamate + L-ornithine. The catalysed reaction is L-glutamate + acetyl-CoA = N-acetyl-L-glutamate + CoA + H(+). It participates in amino-acid biosynthesis; L-arginine biosynthesis; L-ornithine and N-acetyl-L-glutamate from L-glutamate and N(2)-acetyl-L-ornithine (cyclic): step 1/1. The protein operates within amino-acid biosynthesis; L-arginine biosynthesis; N(2)-acetyl-L-ornithine from L-glutamate: step 1/4. Catalyzes two activities which are involved in the cyclic version of arginine biosynthesis: the synthesis of acetylglutamate from glutamate and acetyl-CoA, and of ornithine by transacetylation between acetylornithine and glutamate. The sequence is that of Arginine biosynthesis bifunctional protein ArgJ, mitochondrial from Aspergillus oryzae (strain ATCC 42149 / RIB 40) (Yellow koji mold).